The primary structure comprises 207 residues: Superoxide dismutase [Mn] (207 aa).

H27, H82, D169, and H173 together coordinate Mn(2+).

The protein belongs to the iron/manganese superoxide dismutase family. Mn(2+) is required as a cofactor.

It catalyses the reaction 2 superoxide + 2 H(+) = H2O2 + O2. In terms of biological role, destroys superoxide anion radicals which are normally produced within the cells and which are toxic to biological systems. The sequence is that of Superoxide dismutase [Mn] (sodA) from Yersinia enterocolitica.